The following is a 292-amino-acid chain: Glutathione S-transferase L2, chloroplastic (292 aa).

Residues 1–56 constitute a chloroplast transit peptide; it reads MSVGLKVSAFLHPTLALSSRDVSLSSSSSSLYLDRKILRPGSGRRWCKSRRTEPIL. The GST N-terminal domain maps to 79 to 160; the sequence is GSTRLYISYT…YIDTNFEGPS (82 aa). Glutathione is bound by residues 89-90, 117-118, 131-132, and 144-145; these read CP, NR, KV, and ES. One can recognise a GST C-terminal domain in the interval 130–286; sequence NKVPALEHNN…ELVERYKRRV (157 aa).

The protein belongs to the GST superfamily. Lambda family.

The protein localises to the plastid. It is found in the chloroplast. The catalysed reaction is RX + glutathione = an S-substituted glutathione + a halide anion + H(+). Its function is as follows. Catalyzes the glutathione-dependent reduction of S-glutathionylquercetin to quercetin. In vitro, possesses glutathione-dependent thiol transferase activity toward 2-hydroxyethyl disulfide (HED). This Arabidopsis thaliana (Mouse-ear cress) protein is Glutathione S-transferase L2, chloroplastic (GSTL2).